The chain runs to 163 residues: Transcription elongation factor GreB (163 aa).

A coiled-coil region spans residues 54–76 (GKRRMREIDRRIRFLTKRLEAAV).

This sequence belongs to the GreA/GreB family. GreB subfamily.

In terms of biological role, necessary for efficient RNA polymerase transcription elongation past template-encoded arresting sites. The arresting sites in DNA have the property of trapping a certain fraction of elongating RNA polymerases that pass through, resulting in locked ternary complexes. Cleavage of the nascent transcript by cleavage factors such as GreA or GreB allows the resumption of elongation from the new 3'terminus. GreB releases sequences of up to 9 nucleotides in length. This is Transcription elongation factor GreB from Neisseria meningitidis serogroup B (strain ATCC BAA-335 / MC58).